Reading from the N-terminus, the 532-residue chain is Wee1-like protein kinase 2 (532 aa).

Positions 123 to 166 are disordered; sequence INPFTPDTVRRNSEHYKRKSQRSDDDEDYGPRSKEIQNSSEDES. A Protein kinase domain is found at 188-465; that stretch reads FLELACIGVG…RHDVLCKERA (278 aa). ATP is bound by residues 194–202 and Lys-217; that span reads IGVGEFGSV. Asp-315 functions as the Proton acceptor in the catalytic mechanism. The Mg(2+) site is built by Asn-320 and Asp-354. Residues 469–495 adopt a coiled-coil conformation; the sequence is ATQLRKELNVEKFRTAMLERELKEARL.

Belongs to the protein kinase superfamily. Ser/Thr protein kinase family. WEE1 subfamily.

It is found in the nucleus. The enzyme catalyses L-tyrosyl-[protein] + ATP = O-phospho-L-tyrosyl-[protein] + ADP + H(+). Functionally, oocyte-specific protein tyrosine kinase that phosphorylates and inhibits cdk1 and acts as a key regulator of meiosis. Required to maintain meiotic arrest in oocytes by phosphorylating cdk1 at 'Tyr-15', leading to inhibit cdk1 activity and prevent meiotic reentry. The chain is Wee1-like protein kinase 2 (wee2) from Danio rerio (Zebrafish).